Reading from the N-terminus, the 318-residue chain is Transaldolase (318 aa).

The active-site Schiff-base intermediate with substrate is Lys-131.

This sequence belongs to the transaldolase family. Type 1 subfamily. As to quaternary structure, homodimer.

It localises to the cytoplasm. It carries out the reaction D-sedoheptulose 7-phosphate + D-glyceraldehyde 3-phosphate = D-erythrose 4-phosphate + beta-D-fructose 6-phosphate. It functions in the pathway carbohydrate degradation; pentose phosphate pathway; D-glyceraldehyde 3-phosphate and beta-D-fructose 6-phosphate from D-ribose 5-phosphate and D-xylulose 5-phosphate (non-oxidative stage): step 2/3. Functionally, transaldolase is important for the balance of metabolites in the pentose-phosphate pathway. The sequence is that of Transaldolase from Cellvibrio japonicus (strain Ueda107) (Pseudomonas fluorescens subsp. cellulosa).